The primary structure comprises 410 residues: LL-diaminopimelate aminotransferase (410 aa).

The substrate site is built by Tyr-15 and Gly-42. Residues Tyr-72, 108–109, Tyr-132, Asn-187, Tyr-218, and 246–248 each bind pyridoxal 5'-phosphate; these read SK and SFS. Lys-109, Tyr-132, and Asn-187 together coordinate substrate. The residue at position 249 (Lys-249) is an N6-(pyridoxal phosphate)lysine. Pyridoxal 5'-phosphate is bound by residues Arg-257 and Asn-292. Residues Asn-292 and Arg-388 each contribute to the substrate site.

The protein belongs to the class-I pyridoxal-phosphate-dependent aminotransferase family. LL-diaminopimelate aminotransferase subfamily. Homodimer. Requires pyridoxal 5'-phosphate as cofactor.

The catalysed reaction is (2S,6S)-2,6-diaminopimelate + 2-oxoglutarate = (S)-2,3,4,5-tetrahydrodipicolinate + L-glutamate + H2O + H(+). It participates in amino-acid biosynthesis; L-lysine biosynthesis via DAP pathway; LL-2,6-diaminopimelate from (S)-tetrahydrodipicolinate (aminotransferase route): step 1/1. Involved in the synthesis of meso-diaminopimelate (m-DAP or DL-DAP), required for both lysine and peptidoglycan biosynthesis. Catalyzes the direct conversion of tetrahydrodipicolinate to LL-diaminopimelate. This is LL-diaminopimelate aminotransferase from Geotalea uraniireducens (strain Rf4) (Geobacter uraniireducens).